Reading from the N-terminus, the 255-residue chain is Imidazole glycerol phosphate synthase subunit HisF (255 aa).

Catalysis depends on residues Asp11 and Asp130.

This sequence belongs to the HisA/HisF family. As to quaternary structure, heterodimer of HisH and HisF.

It localises to the cytoplasm. It carries out the reaction 5-[(5-phospho-1-deoxy-D-ribulos-1-ylimino)methylamino]-1-(5-phospho-beta-D-ribosyl)imidazole-4-carboxamide + L-glutamine = D-erythro-1-(imidazol-4-yl)glycerol 3-phosphate + 5-amino-1-(5-phospho-beta-D-ribosyl)imidazole-4-carboxamide + L-glutamate + H(+). It functions in the pathway amino-acid biosynthesis; L-histidine biosynthesis; L-histidine from 5-phospho-alpha-D-ribose 1-diphosphate: step 5/9. Its function is as follows. IGPS catalyzes the conversion of PRFAR and glutamine to IGP, AICAR and glutamate. The HisF subunit catalyzes the cyclization activity that produces IGP and AICAR from PRFAR using the ammonia provided by the HisH subunit. The polypeptide is Imidazole glycerol phosphate synthase subunit HisF (Maricaulis maris (strain MCS10) (Caulobacter maris)).